The primary structure comprises 357 residues: DNA replication and repair protein RecF (357 aa).

Position 30-37 (30-37 (GANGSGKT)) interacts with ATP.

Belongs to the RecF family.

It is found in the cytoplasm. The RecF protein is involved in DNA metabolism; it is required for DNA replication and normal SOS inducibility. RecF binds preferentially to single-stranded, linear DNA. It also seems to bind ATP. The protein is DNA replication and repair protein RecF of Shigella flexneri serotype 5b (strain 8401).